Here is a 169-residue protein sequence, read N- to C-terminus: Large ribosomal subunit protein uL10 (169 aa).

Belongs to the universal ribosomal protein uL10 family. In terms of assembly, part of the ribosomal stalk of the 50S ribosomal subunit. The N-terminus interacts with L11 and the large rRNA to form the base of the stalk. The C-terminus forms an elongated spine to which L12 dimers bind in a sequential fashion forming a multimeric L10(L12)X complex.

Forms part of the ribosomal stalk, playing a central role in the interaction of the ribosome with GTP-bound translation factors. The chain is Large ribosomal subunit protein uL10 from Rickettsia africae (strain ESF-5).